A 31-amino-acid polypeptide reads, in one-letter code: Photosystem II reaction center protein T (31 aa).

Residues 3–23 (ALVYVFLLVGTLMVIFFAIFF) form a helical membrane-spanning segment.

Belongs to the PsbT family. PSII is composed of 1 copy each of membrane proteins PsbA, PsbB, PsbC, PsbD, PsbE, PsbF, PsbH, PsbI, PsbJ, PsbK, PsbL, PsbM, PsbT, PsbX, PsbY, PsbZ, Psb30/Ycf12, at least 3 peripheral proteins of the oxygen-evolving complex and a large number of cofactors. It forms dimeric complexes.

The protein localises to the plastid. The protein resides in the chloroplast thylakoid membrane. Functionally, found at the monomer-monomer interface of the photosystem II (PS II) dimer, plays a role in assembly and dimerization of PSII. PSII is a light-driven water plastoquinone oxidoreductase, using light energy to abstract electrons from H(2)O, generating a proton gradient subsequently used for ATP formation. This is Photosystem II reaction center protein T from Gracilaria tenuistipitata var. liui (Red alga).